The sequence spans 282 residues: Cyclic AMP-dependent transcription factor ATF-5 (282 aa).

Positions 1-21 (MSLLATLGLELDRALLPASGL) are required for protein stabilization induced by IL1B. Residue Lys29 is modified to N6-acetyllysine; by EP300. 2 disordered regions span residues 116–152 (FLDAPPLPPPSPPPLPPPPLPPAPSLPLSLPSFDLPQ) and 173–238 (EEVG…ALEG). An interaction with PTP4A1 region spans residues 119 to 217 (APPLPPPSPP…GDRKQKKRDQ (99 aa)). Positions 120 to 140 (PPLPPPSPPPLPPPPLPPAPS) are enriched in pro residues. Residues 141-150 (LPLSLPSFDL) show a composition bias toward low complexity. Over residues 178-194 (PPLPPPQQPPPPSPPQP) the composition is skewed to pro residues. Positions 208-271 (GDRKQKKRDQ…QYVKDLLIEV (64 aa)) constitute a bZIP domain. Residues 210-230 (RKQKKRDQNKSAALRYRQRKR) are basic motif. The tract at residues 236-250 (LEGECQGLEARNREL) is leucine-zipper. Ser256 is subject to Phosphoserine.

It belongs to the bZIP family. In terms of assembly, binds DNA as a dimer. Interacts with PTP4A1/PRL-1. Interacts with CCND3, but not with CCND1 or CCND2. Interacts with HSPA1A or HSPA1B; the interaction protects ATF5 from degradation via proteasome-dependent and caspase-dependent processes. Interacts (via C-terminal region) with NPM1 (via C-terminal region); the interaction leads to loss of association between HSPA1A or HSPA1B and ATF5 and promotes ATF5 degradation via proteasome-dependent and caspase-dependent processes. Interacts with NLK; the interaction stabilizes ATF5 at the protein level in a kinase-independent manner. Interacts with alpha-tubulin, gamma-tubulin members TUBGCP2 and TUBGCP4, PCNT; the ATF5:PCNT:polyglutamylated tubulin (PGT) tripartite unites the mother centriole and the pericentriolar material (PCM) in the centrosome. Interacts with CEBPB and EP300; EP300 is required for ATF5 and CEBPB interaction and DNA binding. Ubiquitinated by CDC34 and UBE2B in order to be degraded by the proteasome. Cisplatin inhibits ubiquitination and proteasome-mediated degradation by inhibiting the interaction with CDC34. Ubiquitination and degradation by the proteasome are inhibited by NLK in a kinase-independent manner. Post-translationally, phosphorylated by NLK, probably at Ser-92, Thr-94, Ser-126 and Ser-190. In terms of processing, acetylated at Lys-29 by EP300, the acetylation enhances the interaction with CEBPB, DNA-binding and transactivation activity. In terms of tissue distribution, widely expressed with higher expression levels in liver.

Its subcellular location is the cytoplasm. It localises to the nucleus. The protein resides in the cytoskeleton. It is found in the microtubule organizing center. The protein localises to the centrosome. Functionally, transcription factor that either stimulates or represses gene transcription through binding of different DNA regulatory elements such as cAMP response element (CRE) (consensus: 5'-GTGACGT[AC][AG]-3'), ATF5-specific response element (ARE) (consensus: 5'-C[CT]TCT[CT]CCTT[AT]-3') but also the amino acid response element (AARE), present in many viral and cellular promoters. Critically involved, often in a cell type-dependent manner, in cell survival, proliferation, and differentiation. Its transcriptional activity is enhanced by CCND3 and slightly inhibited by CDK4. Important regulator of the cerebral cortex formation, functions in cerebral cortical neuroprogenitor cells to maintain proliferation and to block differentiation into neurons. Must be down-regulated in order for such cells to exit the cycle and differentiate. Participates in the pathways by which SHH promotes cerebellar granule neuron progenitor cells proliferation. Critical for survival of mature olfactory sensory neurons (OSN), directs expression of OSN-specific genes. May be involved in osteogenic differentiation. Promotes cell proliferation and survival by inducing the expression of EGR1 sinergistically with ELK1. Once acetylated by EP300, binds to ARE sequences on target genes promoters, such as BCL2 and EGR1. Plays an anti-apoptotic role through the transcriptional regulation of BCL2, this function seems to be cell type-dependent. Cooperates with NR1I3/CAR in the transcriptional activation of CYP2B6 in liver. In hepatic cells, represses CRE-dependent transcription and inhibits proliferation by blocking at G2/M phase. May act as a negative regulator of IL1B transduction pathway in liver. Upon IL1B stimulus, cooperates with NLK to activate the transactivation activity of C/EBP subfamily members. Besides its function of transcription factor, acts as a cofactor of CEBPB to activate CEBPA and promote adipocyte differentiation. Regulates centrosome dynamics in a cell-cycle- and centriole-age-dependent manner. Forms 9-foci symmetrical ring scaffold around the mother centriole to control centrosome function and the interaction between centrioles and pericentriolar material. In Homo sapiens (Human), this protein is Cyclic AMP-dependent transcription factor ATF-5 (ATF5).